We begin with the raw amino-acid sequence, 293 residues long: 4-hydroxy-tetrahydrodipicolinate synthase (293 aa).

Residue threonine 47 coordinates pyruvate. The active-site Proton donor/acceptor is the tyrosine 136. Lysine 164 serves as the catalytic Schiff-base intermediate with substrate. Isoleucine 206 is a binding site for pyruvate.

This sequence belongs to the DapA family. As to quaternary structure, homotetramer; dimer of dimers.

It localises to the cytoplasm. It carries out the reaction L-aspartate 4-semialdehyde + pyruvate = (2S,4S)-4-hydroxy-2,3,4,5-tetrahydrodipicolinate + H2O + H(+). It participates in amino-acid biosynthesis; L-lysine biosynthesis via DAP pathway; (S)-tetrahydrodipicolinate from L-aspartate: step 3/4. Catalyzes the condensation of (S)-aspartate-beta-semialdehyde [(S)-ASA] and pyruvate to 4-hydroxy-tetrahydrodipicolinate (HTPA). The polypeptide is 4-hydroxy-tetrahydrodipicolinate synthase (Listeria welshimeri serovar 6b (strain ATCC 35897 / DSM 20650 / CCUG 15529 / CIP 8149 / NCTC 11857 / SLCC 5334 / V8)).